The sequence spans 339 residues: DNA-directed RNA polymerase subunit alpha (339 aa).

Residues 1–233 are alpha N-terminal domain (alpha-NTD); it reads MVREKVRIST…DLFIPFLHAE (233 aa). The interval 267 to 339 is alpha C-terminal domain (alpha-CTD); the sequence is IALKSIFIDQ…FTINLPKNKF (73 aa).

The protein belongs to the RNA polymerase alpha chain family. In terms of assembly, in plastids the minimal PEP RNA polymerase catalytic core is composed of four subunits: alpha, beta, beta', and beta''. When a (nuclear-encoded) sigma factor is associated with the core the holoenzyme is formed, which can initiate transcription.

The protein resides in the plastid. It localises to the chloroplast. It catalyses the reaction RNA(n) + a ribonucleoside 5'-triphosphate = RNA(n+1) + diphosphate. DNA-dependent RNA polymerase catalyzes the transcription of DNA into RNA using the four ribonucleoside triphosphates as substrates. This is DNA-directed RNA polymerase subunit alpha from Populus trichocarpa (Western balsam poplar).